We begin with the raw amino-acid sequence, 160 residues long: 3-hydroxyacyl-[acyl-carrier-protein] dehydratase FabZ (160 aa).

Residue histidine 59 is part of the active site.

It belongs to the thioester dehydratase family. FabZ subfamily.

It is found in the cytoplasm. The catalysed reaction is a (3R)-hydroxyacyl-[ACP] = a (2E)-enoyl-[ACP] + H2O. Functionally, involved in unsaturated fatty acids biosynthesis. Catalyzes the dehydration of short chain beta-hydroxyacyl-ACPs and long chain saturated and unsaturated beta-hydroxyacyl-ACPs. This chain is 3-hydroxyacyl-[acyl-carrier-protein] dehydratase FabZ, found in Burkholderia thailandensis (strain ATCC 700388 / DSM 13276 / CCUG 48851 / CIP 106301 / E264).